The following is a 321-amino-acid chain: MSTDQSYAKLKLFALNSNLPLAEKIAQRVGIPLGKSSVKRFSDGEIQINIEESIRGAEVFVIQSISEPVNDTILELLIMIDALRRASASQINVVIPYYGYSRQDRKARSREPITAKLIATLLEKDRASRVLTVDLHAAQIQGFFDIPVDHLFAAPLLASYFKDRGITDNLVVVSPDHAGVSRARKMAELLGAPIAIIDNRHPDDDDLVPSSIIGDVKGRVAIVIDDMIDTGTRFDVSADALAQAGAATVYGCATHAIFSQDAVAKLQASKFEKVIVTDTIQIPADKHFDKLVQLSVGPLLGDAIKLVHEQQPVDRLFDPRI.

Residues 43 to 45 and 102 to 103 contribute to the ATP site; these read DGE and RQ. Positions 136 and 176 each coordinate Mg(2+). Position 225 (Asp-225) interacts with D-ribose 5-phosphate.

This sequence belongs to the ribose-phosphate pyrophosphokinase family. Class I subfamily. In terms of assembly, homohexamer. Mg(2+) serves as cofactor.

The protein resides in the cytoplasm. It carries out the reaction D-ribose 5-phosphate + ATP = 5-phospho-alpha-D-ribose 1-diphosphate + AMP + H(+). It participates in metabolic intermediate biosynthesis; 5-phospho-alpha-D-ribose 1-diphosphate biosynthesis; 5-phospho-alpha-D-ribose 1-diphosphate from D-ribose 5-phosphate (route I): step 1/1. Its function is as follows. Involved in the biosynthesis of the central metabolite phospho-alpha-D-ribosyl-1-pyrophosphate (PRPP) via the transfer of pyrophosphoryl group from ATP to 1-hydroxyl of ribose-5-phosphate (Rib-5-P). The sequence is that of Putative ribose-phosphate pyrophosphokinase 2 from Lactiplantibacillus plantarum (strain ATCC BAA-793 / NCIMB 8826 / WCFS1) (Lactobacillus plantarum).